The chain runs to 88 residues: Small ribosomal subunit protein uS15 (88 aa).

The protein belongs to the universal ribosomal protein uS15 family. As to quaternary structure, part of the 30S ribosomal subunit. Forms a bridge to the 50S subunit in the 70S ribosome, contacting the 23S rRNA.

Functionally, one of the primary rRNA binding proteins, it binds directly to 16S rRNA where it helps nucleate assembly of the platform of the 30S subunit by binding and bridging several RNA helices of the 16S rRNA. In terms of biological role, forms an intersubunit bridge (bridge B4) with the 23S rRNA of the 50S subunit in the ribosome. The sequence is that of Small ribosomal subunit protein uS15 from Geotalea daltonii (strain DSM 22248 / JCM 15807 / FRC-32) (Geobacter daltonii).